The following is a 253-amino-acid chain: MARRKKIYEGKAKILYEGPEPGTIVQYFKDDATAFNAEKRATIDGKGVLNNRLSEFFMTGLNGIGVPTHFIKRLNMREQLVRAVEIIPIEIVVRNTAAGSISKRLGIPEGTALPRPIVEFYYKDDDLGDPIVSEEHIIAFQWASQQDLDDMVALALRVNDFMSGVMLSVGIKLVDFKIEVGRVFEGDYQRLIVADEISPDSCRLWDIKTGEKLDKDVFRRDLGNLADAYTEVAQRLGVLPKNATPMTKPTLIN.

Belongs to the SAICAR synthetase family.

The catalysed reaction is 5-amino-1-(5-phospho-D-ribosyl)imidazole-4-carboxylate + L-aspartate + ATP = (2S)-2-[5-amino-1-(5-phospho-beta-D-ribosyl)imidazole-4-carboxamido]succinate + ADP + phosphate + 2 H(+). It participates in purine metabolism; IMP biosynthesis via de novo pathway; 5-amino-1-(5-phospho-D-ribosyl)imidazole-4-carboxamide from 5-amino-1-(5-phospho-D-ribosyl)imidazole-4-carboxylate: step 1/2. The sequence is that of Phosphoribosylaminoimidazole-succinocarboxamide synthase from Dinoroseobacter shibae (strain DSM 16493 / NCIMB 14021 / DFL 12).